A 145-amino-acid chain; its full sequence is Putative antiporter subunit mnhG2 (145 aa).

3 helical membrane passes run 11–31 (IAAV…IGIV), 51–71 (VLLT…FFSV), and 72–92 (RLLL…HLVA).

The protein belongs to the CPA3 antiporters (TC 2.A.63) subunit G family. In terms of assembly, may form a heterooligomeric complex that consists of seven subunits: mnhA2, mnhB2, mnhC2, mnhD2, mnhE2, mnhF2 and mnhG2.

The protein resides in the cell membrane. The protein is Putative antiporter subunit mnhG2 (mnhG2) of Staphylococcus aureus (strain bovine RF122 / ET3-1).